Here is a 216-residue protein sequence, read N- to C-terminus: CsgBAC operon transcriptional regulatory protein (216 aa).

The region spanning 149–214 (NSTESALLTH…QAVSWANDNL (66 aa)) is the HTH luxR-type domain. Residues 173–192 (NNEIARSLFISENTVKTHLY) constitute a DNA-binding region (H-T-H motif).

It localises to the cell inner membrane. Functionally, the master regulator for adhesive curli fimbriae expression; necessary for transcription of the csgBAC/ymdA operon. Plays a positive role in biofilm formation. May have the capability to respond to starvation and/or high cell density by activating csgBA transcription. Low-level constitutive expression confers an adherent curli fimbriae-expressing phenotype, up-regulates 10 genes and down-regulates 14 others. The chain is CsgBAC operon transcriptional regulatory protein (csgD) from Escherichia coli (strain K12).